Reading from the N-terminus, the 154-residue chain is Peptide deformylase (154 aa).

2 residues coordinate Fe cation: C90 and H132. E133 is an active-site residue. Position 136 (H136) interacts with Fe cation.

The protein belongs to the polypeptide deformylase family. The cofactor is Fe(2+).

The catalysed reaction is N-terminal N-formyl-L-methionyl-[peptide] + H2O = N-terminal L-methionyl-[peptide] + formate. Removes the formyl group from the N-terminal Met of newly synthesized proteins. Requires at least a dipeptide for an efficient rate of reaction. N-terminal L-methionine is a prerequisite for activity but the enzyme has broad specificity at other positions. The sequence is that of Peptide deformylase from Halothermothrix orenii (strain H 168 / OCM 544 / DSM 9562).